Consider the following 315-residue polypeptide: Probable carboxylesterase 3 (315 aa).

An N-acetylmethionine modification is found at M1. Positions 81 to 83 (HGG) match the Involved in the stabilization of the negatively charged intermediate by the formation of the oxyanion hole motif. Residues S160, D258, and H290 contribute to the active site.

It belongs to the 'GDXG' lipolytic enzyme family. Expressed in flowers and siliques.

It catalyses the reaction a carboxylic ester + H2O = an alcohol + a carboxylate + H(+). In terms of biological role, carboxylesterase acting on esters with varying acyl chain length. The polypeptide is Probable carboxylesterase 3 (CXE3) (Arabidopsis thaliana (Mouse-ear cress)).